Here is a 129-residue protein sequence, read N- to C-terminus: Protein BEX2 (129 aa).

The segment at 1-38 (MESKVEQGVKNLNMENDHQEKEEKEEKPQDANKREPVV) is disordered. Residues 15-36 (ENDHQEKEEKEEKPQDANKREP) are compositionally biased toward basic and acidic residues. Arg-51 is modified (omega-N-methylarginine). A disordered region spans residues 108 to 129 (SLRAVSTDPPHHDHHDEFCLMP). Positions 116-129 (PPHHDHHDEFCLMP) are enriched in basic and acidic residues. A his cluster region spans residues 118–122 (HHDHH). Cys-126 serves as a coordination point for Zn(2+).

The protein belongs to the BEX family. Interacts with LMO2, possibly leading to regulate the transcriptional activity of a DNA-binding complex containing LMO2. Interacts with OMP.

It is found in the nucleus. Its subcellular location is the cytoplasm. Regulator of mitochondrial apoptosis and G1 cell cycle. Regulates the level of PP2A regulatory subunit B and PP2A phosphatase activity. In absence of reductive stress, acts as a pseudosubstrate for the CRL2(FEM1B) complex: associates with FEM1B via zinc, thereby preventing association between FEM1B and its substrates. This Rattus norvegicus (Rat) protein is Protein BEX2 (Bex2).